Consider the following 101-residue polypeptide: Ubiquitin-related modifier 1 homolog (101 aa).

Position 101 is a 1-thioglycine (Gly-101). Gly-101 participates in a covalent cross-link: Glycyl lysine isopeptide (Gly-Lys) (interchain with K-? in acceptor proteins).

Belongs to the URM1 family. As to quaternary structure, interacts with cer. C-terminal thiocarboxylation occurs in 2 steps, it is first acyl-adenylated (-COAMP) via the hesA/moeB/thiF part of the MOCS3 homolog, then thiocarboxylated (-COSH) via the rhodanese domain of the MOCS3 homolog.

The protein resides in the cytoplasm. Its pathway is tRNA modification; 5-methoxycarbonylmethyl-2-thiouridine-tRNA biosynthesis. Acts as a sulfur carrier required for 2-thiolation of mcm(5)S(2)U at tRNA wobble positions of cytosolic tRNA(Lys), tRNA(Glu) and tRNA(Gln). Serves as sulfur donor in tRNA 2-thiolation reaction by being thiocarboxylated (-COSH) at its C-terminus by MOCS3. The sulfur is then transferred to tRNA to form 2-thiolation of mcm(5)S(2)U. Also acts as a ubiquitin-like protein (UBL) that is covalently conjugated via an isopeptide bond to lysine residues of target proteins such as Prx2/Jafrac1, Ciao1, Eip71CD and GILT1. The thiocarboxylated form serves as substrate for conjugation and oxidative stress specifically induces the formation of UBL-protein conjugates. The sequence is that of Ubiquitin-related modifier 1 homolog from Drosophila yakuba (Fruit fly).